Here is a 184-residue protein sequence, read N- to C-terminus: Ribulose bisphosphate carboxylase small subunit, chloroplastic 5 (184 aa).

A chloroplast-targeting transit peptide spans 1–43 (MAAAMMNKTIVVSKDGCARSSSIPKVATNKMGFASAVAMKKSR).

Belongs to the RuBisCO small chain family. As to quaternary structure, heterohexadecamer of 8 large and 8 small subunits.

It localises to the plastid. It is found in the chloroplast. RuBisCO catalyzes two reactions: the carboxylation of D-ribulose 1,5-bisphosphate, the primary event in carbon dioxide fixation, as well as the oxidative fragmentation of the pentose substrate. Both reactions occur simultaneously and in competition at the same active site. Although the small subunit is not catalytic it is essential for maximal activity. In Acetabularia peniculus (Green alga), this protein is Ribulose bisphosphate carboxylase small subunit, chloroplastic 5.